Here is a 297-residue protein sequence, read N- to C-terminus: UTP--glucose-1-phosphate uridylyltransferase YngB (297 aa).

A signal peptide spans 1-27 (MRKKVRKAVIPAAGLGTRFLPATKAQP).

It belongs to the UDPGP type 2 family. As to quaternary structure, homodimer.

The enzyme catalyses alpha-D-glucose 1-phosphate + UTP + H(+) = UDP-alpha-D-glucose + diphosphate. It functions in the pathway glycolipid metabolism; diglucosyl-diacylglycerol biosynthesis. Functionally, catalyzes the formation of UDP-glucose from glucose-1-phosphate and UTP. This is an intermediate step in the biosynthesis of diglucosyl-diacylglycerol (Glc2-DAG), i.e. the predominant glycolipid found in B.subtilis membrane, which is also used as a membrane anchor for lipoteichoic acid (LTA). YngB contributes to wall teichoic acid (WTA) glucosylation and glycolipid formation under anaerobic fermentative growth conditions. Might also enter other glycosylation pathways, leading to the decorating of other cell envelope components with glucose residues under anaerobic or other growth conditions. The chain is UTP--glucose-1-phosphate uridylyltransferase YngB (yngB) from Bacillus subtilis (strain 168).